Reading from the N-terminus, the 391-residue chain is 3-ketoacyl-CoA thiolase (391 aa).

The active-site Acyl-thioester intermediate is the Cys95. Catalysis depends on proton acceptor residues His347 and Cys377.

Belongs to the thiolase-like superfamily. Thiolase family. Heterotetramer of two alpha chains (FadB) and two beta chains (FadA).

It localises to the cytoplasm. It catalyses the reaction an acyl-CoA + acetyl-CoA = a 3-oxoacyl-CoA + CoA. The protein operates within lipid metabolism; fatty acid beta-oxidation. Catalyzes the final step of fatty acid oxidation in which acetyl-CoA is released and the CoA ester of a fatty acid two carbons shorter is formed. This chain is 3-ketoacyl-CoA thiolase, found in Hahella chejuensis (strain KCTC 2396).